A 422-amino-acid polypeptide reads, in one-letter code: UDP-N-acetylglucosamine 1-carboxyvinyltransferase (422 aa).

Residue 22–23 (KN) participates in phosphoenolpyruvate binding. Residue arginine 92 coordinates UDP-N-acetyl-alpha-D-glucosamine. The active-site Proton donor is the cysteine 116. Residue cysteine 116 is modified to 2-(S-cysteinyl)pyruvic acid O-phosphothioketal. UDP-N-acetyl-alpha-D-glucosamine is bound by residues aspartate 306 and isoleucine 328.

This sequence belongs to the EPSP synthase family. MurA subfamily.

The protein localises to the cytoplasm. It carries out the reaction phosphoenolpyruvate + UDP-N-acetyl-alpha-D-glucosamine = UDP-N-acetyl-3-O-(1-carboxyvinyl)-alpha-D-glucosamine + phosphate. It functions in the pathway cell wall biogenesis; peptidoglycan biosynthesis. In terms of biological role, cell wall formation. Adds enolpyruvyl to UDP-N-acetylglucosamine. This chain is UDP-N-acetylglucosamine 1-carboxyvinyltransferase, found in Elusimicrobium minutum (strain Pei191).